A 102-amino-acid chain; its full sequence is NADH-quinone oxidoreductase subunit K (102 aa).

Helical transmembrane passes span 5–25 (LSHYLTVSAILFTLGVFGIFL), 31–51 (IVILMSVELILLAVNINMVAF), and 65–85 (LFILTVAAAEAAIGLAILVVF).

It belongs to the complex I subunit 4L family. NDH-1 is composed of 14 different subunits. Subunits NuoA, H, J, K, L, M, N constitute the membrane sector of the complex.

The protein resides in the cell inner membrane. It carries out the reaction a quinone + NADH + 5 H(+)(in) = a quinol + NAD(+) + 4 H(+)(out). Its function is as follows. NDH-1 shuttles electrons from NADH, via FMN and iron-sulfur (Fe-S) centers, to quinones in the respiratory chain. The immediate electron acceptor for the enzyme in this species is believed to be ubiquinone. Couples the redox reaction to proton translocation (for every two electrons transferred, four hydrogen ions are translocated across the cytoplasmic membrane), and thus conserves the redox energy in a proton gradient. This chain is NADH-quinone oxidoreductase subunit K, found in Rhizobium leguminosarum bv. trifolii (strain WSM2304).